The following is a 660-amino-acid chain: DNA mismatch repair protein MutL (660 aa).

Belongs to the DNA mismatch repair MutL/HexB family.

Its function is as follows. This protein is involved in the repair of mismatches in DNA. It is required for dam-dependent methyl-directed DNA mismatch repair. May act as a 'molecular matchmaker', a protein that promotes the formation of a stable complex between two or more DNA-binding proteins in an ATP-dependent manner without itself being part of a final effector complex. This Streptococcus pyogenes serotype M12 (strain MGAS2096) protein is DNA mismatch repair protein MutL.